The following is a 344-amino-acid chain: Fructose-1,6-bisphosphatase class 1 (344 aa).

4 residues coordinate Mg(2+): E91, D110, L112, and D113. Substrate contacts are provided by residues D113–S116 and N200. E272 is a Mg(2+) binding site.

The protein belongs to the FBPase class 1 family. As to quaternary structure, homotetramer. Mg(2+) serves as cofactor.

It localises to the cytoplasm. It carries out the reaction beta-D-fructose 1,6-bisphosphate + H2O = beta-D-fructose 6-phosphate + phosphate. It participates in carbohydrate biosynthesis; Calvin cycle. The sequence is that of Fructose-1,6-bisphosphatase class 1 from Rhodopseudomonas palustris (strain BisA53).